Reading from the N-terminus, the 362-residue chain is Phosphoserine aminotransferase (362 aa).

The L-glutamate site is built by Ser-9 and Arg-42. Residues 76-77, Trp-102, Thr-153, Asp-174, and Gln-197 each bind pyridoxal 5'-phosphate; that span reads GR. Lys-198 carries the post-translational modification N6-(pyridoxal phosphate)lysine. Residue 239–240 participates in pyridoxal 5'-phosphate binding; it reads NT.

The protein belongs to the class-V pyridoxal-phosphate-dependent aminotransferase family. SerC subfamily. In terms of assembly, homodimer. It depends on pyridoxal 5'-phosphate as a cofactor.

Its subcellular location is the cytoplasm. It catalyses the reaction O-phospho-L-serine + 2-oxoglutarate = 3-phosphooxypyruvate + L-glutamate. The catalysed reaction is 4-(phosphooxy)-L-threonine + 2-oxoglutarate = (R)-3-hydroxy-2-oxo-4-phosphooxybutanoate + L-glutamate. The protein operates within amino-acid biosynthesis; L-serine biosynthesis; L-serine from 3-phospho-D-glycerate: step 2/3. Its pathway is cofactor biosynthesis; pyridoxine 5'-phosphate biosynthesis; pyridoxine 5'-phosphate from D-erythrose 4-phosphate: step 3/5. Its function is as follows. Catalyzes the reversible conversion of 3-phosphohydroxypyruvate to phosphoserine and of 3-hydroxy-2-oxo-4-phosphonooxybutanoate to phosphohydroxythreonine. The polypeptide is Phosphoserine aminotransferase (Escherichia coli O6:K15:H31 (strain 536 / UPEC)).